Reading from the N-terminus, the 168-residue chain is Thermonuclease (168 aa).

Positions 1–27 are cleaved as a signal peptide; the sequence is MKKITTGVLILAIAIVVLIFQYINGDG. Residues R64, E72, and R114 contribute to the active site.

Belongs to the thermonuclease family. Ca(2+) is required as a cofactor.

The protein localises to the secreted. It carries out the reaction Endonucleolytic cleavage to nucleoside 3'-phosphates and 3'-phosphooligonucleotide end-products.. Enzyme that catalyzes the hydrolysis of both DNA and RNA at the 5'-position of the phosphodiester bond. This chain is Thermonuclease (nucI), found in Staphylococcus intermedius.